The primary structure comprises 262 residues: Phosphonates import ATP-binding protein PhnC (262 aa).

The region spanning 5 to 253 (ICVEQLSKTF…RFDHLYRSIN (249 aa)) is the ABC transporter domain. 37–44 (GPSGSGKS) contributes to the ATP binding site.

Belongs to the ABC transporter superfamily. Phosphonates importer (TC 3.A.1.9.1) family. The complex is composed of two ATP-binding proteins (PhnC), two transmembrane proteins (PhnE) and a solute-binding protein (PhnD).

It localises to the cell inner membrane. It carries out the reaction phosphonate(out) + ATP + H2O = phosphonate(in) + ADP + phosphate + H(+). Part of the ABC transporter complex PhnCDE involved in phosphonates import. Responsible for energy coupling to the transport system. This is Phosphonates import ATP-binding protein PhnC from Escherichia coli O157:H7.